Reading from the N-terminus, the 226-residue chain is Phosphoheptose isomerase (226 aa).

In terms of domain architecture, SIS spans 50–212; sequence IAGVFETGGK…ERMMGYGTEC (163 aa). 65–67 contributes to the substrate binding site; that stretch reads NGG. Positions 74 and 78 each coordinate Zn(2+). Substrate is bound by residues Glu78, 109–110, 135–137, Ser140, and Gln188; these read ND and STS. Gln188 and His196 together coordinate Zn(2+).

The protein belongs to the SIS family. GmhA subfamily. Zn(2+) is required as a cofactor.

It is found in the cytoplasm. It carries out the reaction 2 D-sedoheptulose 7-phosphate = D-glycero-alpha-D-manno-heptose 7-phosphate + D-glycero-beta-D-manno-heptose 7-phosphate. It functions in the pathway carbohydrate biosynthesis; D-glycero-D-manno-heptose 7-phosphate biosynthesis; D-glycero-alpha-D-manno-heptose 7-phosphate and D-glycero-beta-D-manno-heptose 7-phosphate from sedoheptulose 7-phosphate: step 1/1. Functionally, catalyzes the isomerization of sedoheptulose 7-phosphate in D-glycero-D-manno-heptose 7-phosphate. This is Phosphoheptose isomerase from Chlorobium phaeobacteroides (strain DSM 266 / SMG 266 / 2430).